A 529-amino-acid polypeptide reads, in one-letter code: Nuclear distribution protein PAC1 (529 aa).

Residues 68-89 adopt a coiled-coil conformation; the sequence is RLQHKIIDLEGEVSNLRTVIDS. WD repeat units follow at residues 120 to 159, 165 to 218, 221 to 261, 264 to 318, 321 to 395, 416 to 455, and 496 to 529; these read QSHQ…SLIP, AHIR…HIRT, GHEH…CIKT, GHSD…GLSL, GHTH…FRPH, GHQS…VNGR, and TEED…RLWS.

The protein belongs to the WD repeat LIS1/nudF family. In terms of assembly, self-associates. Interacts with NDL1 and dynein.

The protein resides in the cytoplasm. The protein localises to the cytoskeleton. It is found in the spindle pole. Positively regulates the activity of the minus-end directed microtubule motor protein dynein. Plays a central role in positioning the mitotic spindle at the bud neck during cell division. Targets cytoplasmic dynein to microtubule plus ends, thereby promoting dynein-mediated microtubule sliding along the bud cortex and consequently the movement of the mitotic spindle to the bud neck. In Debaryomyces hansenii (strain ATCC 36239 / CBS 767 / BCRC 21394 / JCM 1990 / NBRC 0083 / IGC 2968) (Yeast), this protein is Nuclear distribution protein PAC1.